The chain runs to 715 residues: MDTSSNVFHYQVLWTSDKAKKVKVWKDGTMRFHSFNNRGILYDSDNRVVDDFFLNNKRIVLDSEIEFNRTIVYVENLQTTTEANIPPIPRKSKLSETGKRPAYLLKPFQPPFHSANSDVSNNSNGALSSNMLKTHAHHTNSTKSTIFRNANLQSYGVDDSDIGSLRCSSKHQLSVTPEIQPKAKFRPNSYLASSVEESNRANNTSPYPPSNSSVTALPKPSKIAYIPVLSKPKSFNGTLVEDPVEEFGEDDIASDFFSSPSADLEADDFTTLNNSNAGHLLQNLSNDNVSVSVKALENGNEEVSNNHARSPHSSRACNTIPSNKNDGLNDDHQRQDSSVAEPSPTSKRLRLTRLPLPLLRKPTGKRQNFINITVTDPSKNLYERSVKTAAELASLQNVTETTDNEIPNSPDFLDAASEEDEHIPSLDSSSLLTPLALPNKKAFQPVKFRVPSFSSPLVKPASSSSFGRSHSHLGTSLRSNELNGSSASSSIFLQSNNAVNPNVSPSTVLEHAKHPSLAKHSGVSLRTGLLIYPKYANGSKRKDGFGATSIISSGEHSSLPKNSKSRNVSVFSSPFNVPSFTVSSSDQVQKKKGNVPNAIETDSSPSDTISSSPTVRAVNLSPSKNQKPPKILTKIPDIFSKAGKKSPILPTFQESCSLPIEPFSSNITDLPFVNTVTLASTSSKIKRAKLKMLKFKHAMTTQGRDLDSDEDGDFI.

Disordered regions lie at residues 192-216, 300-348, 461-481, and 580-630; these read ASSVEESNRANNTSPYPPSNSSVTA, NEEV…TSKR, ASSSSFGRSHSHLGTSLRSNE, and FTVS…KPPK. Residues 202–213 show a composition bias toward low complexity; it reads NNTSPYPPSNSS. Polar residues-rich tracts occupy residues 301–326 and 472–481; these read EEVSNNHARSPHSSRACNTIPSNKND and HLGTSLRSNE. A compositionally biased stretch (low complexity) spans 601–614; that stretch reads TDSSPSDTISSSPT.

This is an uncharacterized protein from Schizosaccharomyces pombe (strain 972 / ATCC 24843) (Fission yeast).